The chain runs to 301 residues: Rhodopsin (301 aa).

The Extracellular segment spans residues leucine 1 to methionine 18. The helical transmembrane segment at tyrosine 19–valine 43 threads the bilayer. Over phenylalanine 44 to asparagine 55 the chain is Cytoplasmic. A helical transmembrane segment spans residues leucine 56 to isoleucine 78. The Extracellular portion of the chain corresponds to threonine 79–cysteine 92. An intrachain disulfide couples cysteine 92 to cysteine 169. Residues glutamine 93–phenylalanine 115 traverse the membrane as a helical segment. Residues aspartate 116–tyrosine 118 carry the 'Ionic lock' involved in activated form stabilization motif. Residues aspartate 116–lysine 134 lie on the Cytoplasmic side of the membrane. Residues alanine 135 to phenylalanine 155 traverse the membrane as a helical segment. Over glycine 156 to serine 182 the chain is Extracellular. Asparagine 165 is a glycosylation site (N-linked (GlcNAc...) asparagine). Residues tyrosine 183–valine 204 form a helical membrane-spanning segment. The Cytoplasmic segment spans residues valine 205–lysine 245. A helical membrane pass occupies residues isoleucine 246–valine 267. Residues glycine 268 to valine 278 are Extracellular-facing. A helical transmembrane segment spans residues tyrosine 279–isoleucine 300. Residue lysine 288 is modified to N6-(retinylidene)lysine.

It belongs to the G-protein coupled receptor 1 family. Opsin subfamily. In terms of assembly, homodimer. Interacts with GNAQ. Post-translationally, contains one covalently linked retinal chromophore.

Its subcellular location is the cell projection. It is found in the rhabdomere membrane. Functionally, photoreceptor required for image-forming vision at low light intensity. Can use both retinal and 3-dehydroretinal as visual pigment. Light-induced isomerization of 11-cis to all-trans retinal triggers a conformational change that activates signaling via G-proteins. Signaling via GNAQ probably mediates the activation of phospholipase C. The protein is Rhodopsin (RHO) of Orconectes australis (Southern cave crayfish).